A 483-amino-acid chain; its full sequence is Aspartyl/glutamyl-tRNA(Asn/Gln) amidotransferase subunit B (483 aa).

This sequence belongs to the GatB/GatE family. GatB subfamily. As to quaternary structure, heterotrimer of A, B and C subunits.

The catalysed reaction is L-glutamyl-tRNA(Gln) + L-glutamine + ATP + H2O = L-glutaminyl-tRNA(Gln) + L-glutamate + ADP + phosphate + H(+). The enzyme catalyses L-aspartyl-tRNA(Asn) + L-glutamine + ATP + H2O = L-asparaginyl-tRNA(Asn) + L-glutamate + ADP + phosphate + 2 H(+). Allows the formation of correctly charged Asn-tRNA(Asn) or Gln-tRNA(Gln) through the transamidation of misacylated Asp-tRNA(Asn) or Glu-tRNA(Gln) in organisms which lack either or both of asparaginyl-tRNA or glutaminyl-tRNA synthetases. The reaction takes place in the presence of glutamine and ATP through an activated phospho-Asp-tRNA(Asn) or phospho-Glu-tRNA(Gln). The protein is Aspartyl/glutamyl-tRNA(Asn/Gln) amidotransferase subunit B of Rickettsia rickettsii (strain Sheila Smith).